Reading from the N-terminus, the 432-residue chain is Adenylosuccinate synthetase (432 aa).

GTP is bound by residues 13–19 (GDEGKGK) and 41–43 (GHT). Residue aspartate 14 is the Proton acceptor of the active site. 2 residues coordinate Mg(2+): aspartate 14 and glycine 41. Residues 14–17 (DEGK), 39–42 (NAGH), threonine 130, arginine 144, glutamine 225, threonine 240, and arginine 304 each bind IMP. Histidine 42 acts as the Proton donor in catalysis. 300-306 (AVTGRPR) contacts substrate. Residues arginine 306, 332 to 334 (KLD), and 415 to 417 (STG) contribute to the GTP site.

The protein belongs to the adenylosuccinate synthetase family. Homodimer. Mg(2+) is required as a cofactor.

It localises to the cytoplasm. The catalysed reaction is IMP + L-aspartate + GTP = N(6)-(1,2-dicarboxyethyl)-AMP + GDP + phosphate + 2 H(+). It functions in the pathway purine metabolism; AMP biosynthesis via de novo pathway; AMP from IMP: step 1/2. Plays an important role in the de novo pathway of purine nucleotide biosynthesis. Catalyzes the first committed step in the biosynthesis of AMP from IMP. The polypeptide is Adenylosuccinate synthetase (Pasteurella multocida (strain Pm70)).